Here is a 332-residue protein sequence, read N- to C-terminus: Nucleoid-associated protein VP2128 (332 aa).

This sequence belongs to the YejK family.

It localises to the cytoplasm. Its subcellular location is the nucleoid. The chain is Nucleoid-associated protein VP2128 from Vibrio parahaemolyticus serotype O3:K6 (strain RIMD 2210633).